The chain runs to 994 residues: Sarcoplasmic/endoplasmic reticulum calcium ATPase 1 (994 aa).

Topologically, residues 1–48 (MEAAHSKSTEECLSYFGVSETTGLTPDQVKRHLEKYGPNELPAEEGKS) are cytoplasmic. A helical membrane pass occupies residues 49 to 69 (LWELVVEQFEDLLVRILLLAA). At 70–89 (CISFVLAWFEEGEETVTAFV) the chain is on the lumenal side. Residues 90–110 (EPFVILLILIANAIVGVWQER) form a helical membrane-spanning segment. Residues 111–253 (NAENAIEALK…QDKTPLQQKL (143 aa)) lie on the Cytoplasmic side of the membrane. The helical transmembrane segment at 254 to 273 (DEFGEQLSKVISLICVAVWL) threads the bilayer. At 274 to 295 (INIGHFNDPVHGGSWFRGAIYY) the chain is on the lumenal side. The helical transmembrane segment at 296 to 313 (FKIAVALAVAAIPEGLPA) threads the bilayer. 4 residues coordinate Ca(2+): Val-304, Ala-305, Ile-307, and Glu-309. At 314–757 (VITTCLALGT…EEGRAIYNNM (444 aa)) the chain is on the cytoplasmic side. The 4-aspartylphosphate intermediate role is filled by Asp-351. Mg(2+) is bound by residues Asp-351 and Thr-353. ATP is bound at residue Thr-353. Thr-441 carries the phosphothreonine modification. The ATP site is built by Glu-442, Arg-489, Lys-515, and Arg-560. Thr-569 is subject to Phosphothreonine. Position 581 is a phosphoserine (Ser-581). ATP is bound by residues Thr-625, Gly-626, and Asp-627. Position 643 is a phosphoserine (Ser-643). Residues Arg-678 and Lys-684 each coordinate ATP. Residue Asp-703 participates in Mg(2+) binding. Asn-706 provides a ligand contact to ATP. The helical transmembrane segment at 758–777 (KQFIRYLISSNVGEVVCIFL) threads the bilayer. Asn-768 and Glu-771 together coordinate Ca(2+). The Lumenal portion of the chain corresponds to 778–787 (TAALGLPEAL). A helical transmembrane segment spans residues 788–808 (IPVQLLWVNLVTDGLPATALG). The tract at residues 788–808 (IPVQLLWVNLVTDGLPATALG) is interaction with PLN. Residues Asn-796, Thr-799, and Asp-800 each coordinate Ca(2+). Over 809–828 (FNPPDLDIMDRPPRSPKEPL) the chain is Cytoplasmic. The chain crosses the membrane as a helical span at residues 829-851 (ISGWLFFRYMAIGGYVGAATVGA). Residues 852 to 897 (AAWWFLYAEDGPHVSYHQLTHFMQCTEHNPEFDGLDCEVFEAPEPM) lie on the Lumenal side of the membrane. The cysteines at positions 876 and 888 are disulfide-linked. A helical membrane pass occupies residues 898-917 (TMALSVLVTIEMCNALNSLS). Glu-908 is a Ca(2+) binding site. Residues 918-930 (ENQSLLRMPPWVN) lie on the Cytoplasmic side of the membrane. The helical transmembrane segment at 931–949 (IWLLGSICLSMSLHFLILY) threads the bilayer. An interaction with PLN region spans residues 932-943 (WLLGSICLSMSL). The Lumenal portion of the chain corresponds to 950–964 (VDPLPMIFKLRALDF). The helical transmembrane segment at 965–985 (TQWLMVLKISLPVIGLDELLK) threads the bilayer. Topologically, residues 986–994 (FIARNYLEG) are cytoplasmic.

Belongs to the cation transport ATPase (P-type) (TC 3.A.3) family. Type IIA subfamily. As to quaternary structure, interacts with sarcolipin (SLN). Interacts with phospholamban (PLN). Interacts with myoregulin (MRLN). Interacts with DWORF. Interacts with VMP1. The cofactor is Mg(2+).

Its subcellular location is the endoplasmic reticulum membrane. The protein localises to the sarcoplasmic reticulum membrane. It catalyses the reaction Ca(2+)(in) + ATP + H2O = Ca(2+)(out) + ADP + phosphate + H(+). With respect to regulation, inhibited by sarcolipin (SLN) and myoregulin (MRLN). Has also been shown to be reversibly inhibited by phospholamban (PLN) at low calcium concentrations in vitro. Dephosphorylated PLN decreases the apparent affinity of the ATPase for calcium in vitro and this inhibition is regulated by the phosphorylation of PLN. Enhanced by DWORF; DWORF increases activity by displacing sarcolipin (SLN), phospholamban (PLN) and myoregulin (MRLN). Its function is as follows. Key regulator of striated muscle performance by acting as the major Ca(2+) ATPase responsible for the reuptake of cytosolic Ca(2+) into the sarcoplasmic reticulum. Catalyzes the hydrolysis of ATP coupled with the translocation of calcium from the cytosol to the sarcoplasmic reticulum lumen. Contributes to calcium sequestration involved in muscular excitation/contraction. This chain is Sarcoplasmic/endoplasmic reticulum calcium ATPase 1 (Atp2a1), found in Mus musculus (Mouse).